We begin with the raw amino-acid sequence, 145 residues long: uncharacterized protein (145 aa).

The protein to R.meliloti R00649.

This is an uncharacterized protein from Agrobacterium fabrum (strain C58 / ATCC 33970) (Agrobacterium tumefaciens (strain C58)).